Here is a 424-residue protein sequence, read N- to C-terminus: Endoglucanase 1 (424 aa).

The N-terminal stretch at 1–18 (MAKFSALCSLALLGLATA) is a signal peptide. Intrachain disulfides connect Cys-35–Cys-41, Cys-68–Cys-90, Cys-80–Cys-86, Cys-156–Cys-384, Cys-188–Cys-211, Cys-192–Cys-210, Cys-231–Cys-250, Cys-239–Cys-244, and Cys-255–Cys-331. N-linked (GlcNAc...) asparagine glycosylation is present at Asn-76. The Nucleophile role is filled by Glu-213. The active-site Proton donor is Glu-218. N-linked (GlcNAc...) asparagine glycans are attached at residues Asn-271 and Asn-385.

Belongs to the glycosyl hydrolase 7 (cellulase C) family. Monomer.

The protein resides in the secreted. The catalysed reaction is Endohydrolysis of (1-&gt;4)-beta-D-glucosidic linkages in cellulose, lichenin and cereal beta-D-glucans.. Functionally, endoglucanase that is involved in the biological conversion of cellulose to glucose. Hydrolyzes internal beta-1,4-glucosidic bonds. This is Endoglucanase 1 from Pyricularia oryzae (strain 70-15 / ATCC MYA-4617 / FGSC 8958) (Rice blast fungus).